A 304-amino-acid polypeptide reads, in one-letter code: 3-diazoavenalumate denitrifying reductase (304 aa).

It belongs to the NAD(P)-dependent epimerase/dehydratase family.

It carries out the reaction 3-diazoavenalumate + NADPH + H(+) = avenalumate + N2 + NADP(+). It catalyses the reaction 3-diazoavenalumate + NADH + H(+) = avenalumate + N2 + NAD(+). The enzyme catalyses (E)-3-diazocoumarate + NADPH = N2 + (E)-4-coumarate + NADP(+). The catalysed reaction is (E)-3-diazocoumarate + NADH = N2 + (E)-4-coumarate + NAD(+). Functionally, oxidoreductase involved in the biosynthesis of avenalumic acid (AVA). Catalyzes the denitrification of 3-diazoavenalumic acid (3-DAA) to produce AVA. It can also act on 3-diazocoumaric acid (3-DCA). Can use NADPH or NADH as a reductant, with a preference for NADPH. The chain is 3-diazoavenalumate denitrifying reductase from Streptomyces sp.